A 132-amino-acid polypeptide reads, in one-letter code: DNA-directed RNA polymerase subunit omega (132 aa).

Positions 90–109 are disordered; that stretch reads SSEAGGVLGTSSEEEGSSFD.

Belongs to the RNA polymerase subunit omega family. As to quaternary structure, the RNAP catalytic core consists of 2 alpha, 1 beta, 1 beta' and 1 omega subunit. When a sigma factor is associated with the core the holoenzyme is formed, which can initiate transcription.

The enzyme catalyses RNA(n) + a ribonucleoside 5'-triphosphate = RNA(n+1) + diphosphate. Its function is as follows. Promotes RNA polymerase assembly. Latches the N- and C-terminal regions of the beta' subunit thereby facilitating its interaction with the beta and alpha subunits. The chain is DNA-directed RNA polymerase subunit omega from Bartonella henselae (strain ATCC 49882 / DSM 28221 / CCUG 30454 / Houston 1) (Rochalimaea henselae).